A 37-amino-acid polypeptide reads, in one-letter code: Protamine Z3 (37 aa).

Residues 1 to 37 (ARSRSRRSYGRGRRRGGRRRRRRRRRRRGGRRGRRSR) are disordered.

As to expression, testis.

It is found in the nucleus. The protein localises to the chromosome. Protamines substitute for histones in the chromatin of sperm during the haploid phase of spermatogenesis. They compact sperm DNA into a highly condensed, stable and inactive complex. The sequence is that of Protamine Z3 from Scyliorhinus canicula (Small-spotted catshark).